We begin with the raw amino-acid sequence, 158 residues long: Protein-export protein SecB (158 aa).

Belongs to the SecB family. As to quaternary structure, homotetramer, a dimer of dimers. One homotetramer interacts with 1 SecA dimer.

The protein resides in the cytoplasm. Its function is as follows. One of the proteins required for the normal export of preproteins out of the cell cytoplasm. It is a molecular chaperone that binds to a subset of precursor proteins, maintaining them in a translocation-competent state. It also specifically binds to its receptor SecA. In Photorhabdus laumondii subsp. laumondii (strain DSM 15139 / CIP 105565 / TT01) (Photorhabdus luminescens subsp. laumondii), this protein is Protein-export protein SecB.